The chain runs to 84 residues: MAQTQSPFQWLATKLIRGYQIFISPILGPKCRFQPTCSHYAIEAIQLHGVIKGSWFAAKRILKCHPLHPGGNDPVPPKKDRCNK.

This sequence belongs to the UPF0161 family.

It is found in the cell inner membrane. Could be involved in insertion of integral membrane proteins into the membrane. The polypeptide is Putative membrane protein insertion efficiency factor (Shewanella amazonensis (strain ATCC BAA-1098 / SB2B)).